The following is a 968-amino-acid chain: Insulin receptor substrate 1 (968 aa).

The PH domain occupies 8-109 (GMALSGYLKK…WLDKLLVLQR (102 aa)). In terms of domain architecture, IRS-type PTB spans 122-236 (YDHVWQVVIQ…SAMSAKTESN (115 aa)). The tract at residues 248–269 (DLSHEPMRKRSSSANEASKPIN) is disordered. A phosphoserine mark is found at Ser286 and Ser287. A compositionally biased stretch (polar residues) spans 304 to 329 (RNGTLSESSNQTYFGSNHGLRSNTIS). The interval 304 to 370 (RNGTLSESSN…VDESDDNGSF (67 aa)) is disordered. Ser342 bears the Phosphoserine mark. Phosphotyrosine; by INSR is present on Tyr411. Residues 411–414 (YIPM) carry the YXXM motif 1 motif. Residues 528–555 (TANRSQSSITKEGTSYGSSANRQKKSTS) form a disordered region. The span at 529-555 (ANRSQSSITKEGTSYGSSANRQKKSTS) shows a compositional bias: polar residues. A Phosphoserine modification is found at Ser555. A YXXM motif 2 motif is present at residues 641-644 (YLEM). The span at 697–711 (EKWREQPSRSEEKKS) shows a compositional bias: basic and acidic residues. The segment at 697–739 (EKWREQPSRSEEKKSNSPLNDNTFSSKPTNVESTSKSHDVHSA) is disordered. Over residues 712-730 (NSPLNDNTFSSKPTNVEST) the composition is skewed to polar residues. A Phosphotyrosine; by INSR modification is found at Tyr911. The interval 922–968 (QNPAKYLKRGSRESPPVSACPEDGNTYAKIDFDQSDSSSSSSNIFNT) is disordered. Phosphoserine occurs at positions 932 and 935. Tyr948 carries the post-translational modification Phosphotyrosine; by INSR. The span at 956-968 (SDSSSSSSNIFNT) shows a compositional bias: low complexity.

In terms of assembly, bindings to phosphatidylinositol 3-kinase and SHP2.

In terms of biological role, activates phosphatidylinositol 3-kinase when bound to the regulatory p85 subunit. May mediate the control of various cellular processes by insulin-like peptides. When phosphorylated by the insulin receptor binds specifically to various cellular proteins containing SH2 domains. Involved in control of cell proliferation, cell size, and body and organ growth throughout development. Also has a role in a signaling pathway controlling the physiological response required to endure periods of low nutrient conditions. Insulin/insulin-like growth factor (IGF) signaling pathway has a role in regulating aging and is necessary in the ovary for vitellogenic maturation. The polypeptide is Insulin receptor substrate 1 (chico) (Drosophila melanogaster (Fruit fly)).